We begin with the raw amino-acid sequence, 465 residues long: Hexokinase-4 (465 aa).

Positions 10–454 constitute a Hexokinase domain; that stretch reads ATKKEKVEQI…SGRGAALVSA (445 aa). The segment at 67-203 is hexokinase small subdomain; it reads EGSEVGDFLS…DFEMDVVAMV (137 aa). 78-83 provides a ligand contact to ATP; it reads DLGGTN. Substrate-binding positions include 151–152, 168–169, and 204–205; these read SF, TK, and ND. A hexokinase large subdomain region spans residues 204-443; it reads NDTVATMISC…CEITFIESEE (240 aa). Threonine 228 is an ATP binding site. 3 residues coordinate substrate: asparagine 231, glutamate 256, and glutamate 290. Residues 295 to 296, 332 to 336, and 411 to 415 contribute to the ATP site; these read GK, TRFVS, and SVYKL.

This sequence belongs to the hexokinase family. In terms of assembly, monomer. Interacts with MIDN; the interaction occurs preferentially at low glucose levels and results in inhibition of hexokinase activity. Interacts with GCKR; leading to sequestration in the nucleus. As to expression, expression is restricted to the liver and pancreatic islets (at protein level).

Its subcellular location is the cytoplasm. It is found in the nucleus. The protein resides in the mitochondrion. The catalysed reaction is a D-hexose + ATP = a D-hexose 6-phosphate + ADP + H(+). It catalyses the reaction D-fructose + ATP = D-fructose 6-phosphate + ADP + H(+). It carries out the reaction D-glucose + ATP = D-glucose 6-phosphate + ADP + H(+). The enzyme catalyses D-mannose + ATP = D-mannose 6-phosphate + ADP + H(+). Its pathway is carbohydrate metabolism; hexose metabolism. It functions in the pathway carbohydrate degradation; glycolysis; D-glyceraldehyde 3-phosphate and glycerone phosphate from D-glucose: step 1/4. Its activity is regulated as follows. Subject to allosteric regulation. Low glucose and high fructose-6-phosphate triggers association with the inhibitor GCKR followed by sequestration in the nucleus. In terms of biological role, catalyzes the phosphorylation of hexose, such as D-glucose, D-fructose and D-mannose, to hexose 6-phosphate (D-glucose 6-phosphate, D-fructose 6-phosphate and D-mannose 6-phosphate, respectively). Compared to other hexokinases, has a weak affinity for D-glucose, and is effective only when glucose is abundant. Mainly expressed in pancreatic beta cells and the liver and constitutes a rate-limiting step in glucose metabolism in these tissues. Since insulin secretion parallels glucose metabolism and the low glucose affinity of GCK ensures that it can change its enzymatic activity within the physiological range of glucose concentrations, GCK acts as a glucose sensor in the pancreatic beta cell. In pancreas, plays an important role in modulating insulin secretion. In liver, helps to facilitate the uptake and conversion of glucose by acting as an insulin-sensitive determinant of hepatic glucose usage. Required to provide D-glucose 6-phosphate for the synthesis of glycogen. Mediates the initial step of glycolysis by catalyzing phosphorylation of D-glucose to D-glucose 6-phosphate. The chain is Hexokinase-4 from Rattus norvegicus (Rat).